The sequence spans 229 residues: Large ribosomal subunit protein bL25 (229 aa).

2 disordered regions span residues 1-21 (MDIIKLNATRREDSGKSASSR) and 182-229 (NAPE…KDKK). Residues 195–222 (PAAGAPAAGAAAAPAAGAAAPAKGAAPA) are compositionally biased toward low complexity.

This sequence belongs to the bacterial ribosomal protein bL25 family. CTC subfamily. As to quaternary structure, part of the 50S ribosomal subunit; part of the 5S rRNA/L5/L18/L25 subcomplex. Contacts the 5S rRNA. Binds to the 5S rRNA independently of L5 and L18.

Functionally, this is one of the proteins that binds to the 5S RNA in the ribosome where it forms part of the central protuberance. The protein is Large ribosomal subunit protein bL25 of Sorangium cellulosum (strain So ce56) (Polyangium cellulosum (strain So ce56)).